A 168-amino-acid chain; its full sequence is Crossover junction endodeoxyribonuclease RuvC (168 aa).

Active-site residues include D10, E70, and D143. Residues D10, E70, and D143 each contribute to the Mg(2+) site.

It belongs to the RuvC family. In terms of assembly, homodimer which binds Holliday junction (HJ) DNA. The HJ becomes 2-fold symmetrical on binding to RuvC with unstacked arms; it has a different conformation from HJ DNA in complex with RuvA. In the full resolvosome a probable DNA-RuvA(4)-RuvB(12)-RuvC(2) complex forms which resolves the HJ. Requires Mg(2+) as cofactor.

It localises to the cytoplasm. It catalyses the reaction Endonucleolytic cleavage at a junction such as a reciprocal single-stranded crossover between two homologous DNA duplexes (Holliday junction).. Functionally, the RuvA-RuvB-RuvC complex processes Holliday junction (HJ) DNA during genetic recombination and DNA repair. Endonuclease that resolves HJ intermediates. Cleaves cruciform DNA by making single-stranded nicks across the HJ at symmetrical positions within the homologous arms, yielding a 5'-phosphate and a 3'-hydroxyl group; requires a central core of homology in the junction. The consensus cleavage sequence is 5'-(A/T)TT(C/G)-3'. Cleavage occurs on the 3'-side of the TT dinucleotide at the point of strand exchange. HJ branch migration catalyzed by RuvA-RuvB allows RuvC to scan DNA until it finds its consensus sequence, where it cleaves and resolves the cruciform DNA. The sequence is that of Crossover junction endodeoxyribonuclease RuvC from Thermotoga maritima (strain ATCC 43589 / DSM 3109 / JCM 10099 / NBRC 100826 / MSB8).